The chain runs to 61 residues: Large ribosomal subunit protein bL32 (61 aa).

The protein belongs to the bacterial ribosomal protein bL32 family.

This chain is Large ribosomal subunit protein bL32, found in Phytoplasma mali (strain AT).